The primary structure comprises 467 residues: Polygalacturonase (467 aa).

An N-terminal signal peptide occupies residues 1–27 (MALQRRFFQFVIITLLIPSFILGYTSA). The active-site Proton donor is the aspartate 283. A glycan (N-linked (GlcNAc...) asparagine) is linked at asparagine 290. The active site involves histidine 306.

It belongs to the glycosyl hydrolase 28 family.

The protein localises to the secreted. The protein resides in the cell wall. The catalysed reaction is (1,4-alpha-D-galacturonosyl)n+m + H2O = (1,4-alpha-D-galacturonosyl)n + (1,4-alpha-D-galacturonosyl)m.. Its function is as follows. Acts in concert with the pectinesterase, in the ripening process. Is involved in cell wall metabolism, specifically in polyuronide degradation. The polypeptide is Polygalacturonase (Actinidia deliciosa (Kiwi)).